The following is a 101-amino-acid chain: Apolipoprotein C-II (101 aa).

An N-terminal signal peptide occupies residues Met-1–Gly-22. The lipid binding stretch occupies residues Thr-66 to Ile-74. Residues Ser-78–Gln-101 form a lipoprotein lipase cofactor region.

The protein belongs to the apolipoprotein C2 family. In terms of processing, proapolipoprotein C-II is synthesized as a sialic acid containing glycoprotein which is subsequently desialylated prior to its proteolytic processing. Post-translationally, proapolipoprotein C-II, the major form found in plasma undergoes proteolytic cleavage of its N-terminal hexapeptide to generate apolipoprotein C-II, which occurs as the minor form in plasma.

The protein localises to the secreted. In terms of biological role, component of chylomicrons, very low-density lipoproteins (VLDL), low-density lipoproteins (LDL), and high-density lipoproteins (HDL) in plasma. Plays an important role in lipoprotein metabolism as an activator of lipoprotein lipase. Both proapolipoprotein C-II and apolipoprotein C-II can activate lipoprotein lipase. This chain is Apolipoprotein C-II (APOC2), found in Phoca vitulina (Harbor seal).